A 325-amino-acid polypeptide reads, in one-letter code: Lipoyl synthase (325 aa).

Cys72, Cys77, Cys83, Cys98, Cys102, Cys105, and Ser312 together coordinate [4Fe-4S] cluster. The Radical SAM core domain maps to 84-301 (FAGGTATFMI…AEEGERMGFK (218 aa)).

It belongs to the radical SAM superfamily. Lipoyl synthase family. [4Fe-4S] cluster is required as a cofactor.

The protein resides in the cytoplasm. It carries out the reaction [[Fe-S] cluster scaffold protein carrying a second [4Fe-4S](2+) cluster] + N(6)-octanoyl-L-lysyl-[protein] + 2 oxidized [2Fe-2S]-[ferredoxin] + 2 S-adenosyl-L-methionine + 4 H(+) = [[Fe-S] cluster scaffold protein] + N(6)-[(R)-dihydrolipoyl]-L-lysyl-[protein] + 4 Fe(3+) + 2 hydrogen sulfide + 2 5'-deoxyadenosine + 2 L-methionine + 2 reduced [2Fe-2S]-[ferredoxin]. Its pathway is protein modification; protein lipoylation via endogenous pathway; protein N(6)-(lipoyl)lysine from octanoyl-[acyl-carrier-protein]: step 2/2. Catalyzes the radical-mediated insertion of two sulfur atoms into the C-6 and C-8 positions of the octanoyl moiety bound to the lipoyl domains of lipoate-dependent enzymes, thereby converting the octanoylated domains into lipoylated derivatives. The sequence is that of Lipoyl synthase from Azotobacter vinelandii (strain DJ / ATCC BAA-1303).